We begin with the raw amino-acid sequence, 417 residues long: Lysosome-associated membrane glycoprotein 1 (417 aa).

The N-terminal stretch at 1-28 (MAAPGSARRPLLLLLLLLLLGLMHCASA) is a signal peptide. The first lumenal domain stretch occupies residues 29–194 (AMFMVKNGNG…SRGETRCEQD (166 aa)). Residues 29–382 (AMFMVKNGNG…EECLLDENSM (354 aa)) are Lumenal-facing. Residues asparagine 37 and asparagine 45 are each glycosylated (N-linked (GlcNAc...) asparagine). Cysteine 41 and cysteine 80 are joined by a disulfide. The N-linked (GlcNAc...) (polylactosaminoglycan) asparagine glycan is linked to asparagine 62. Residues asparagine 76, asparagine 84, asparagine 103, and asparagine 107 are each glycosylated (N-linked (GlcNAc...) asparagine). Asparagine 121 and asparagine 130 each carry an N-linked (GlcNAc...) (polylactosaminoglycan) asparagine glycan. An intrachain disulfide couples cysteine 155 to cysteine 191. Asparagine 165 and asparagine 181 each carry an N-linked (GlcNAc...) asparagine glycan. The segment at 184–221 (FSRGETRCEQDRPSPTTAPPAPPSPSPSPVPKSPSVDK) is disordered. The tract at residues 195–227 (RPSPTTAPPAPPSPSPSPVPKSPSVDKYNVSGT) is hinge. O-linked (GalNAc...) serine; partial glycosylation is present at serine 197. Threonine 199 and threonine 200 each carry an O-linked (GalNAc...) threonine glycan. The span at 199 to 215 (TTAPPAPPSPSPSPVPK) shows a compositional bias: pro residues. Serine 207, serine 209, and serine 211 each carry an O-linked (GalNAc...) serine glycan. N-linked (GlcNAc...) (polylactosaminoglycan) asparagine glycans are attached at residues asparagine 223 and asparagine 228. Positions 228–382 (NGTCLLASMG…EECLLDENSM (155 aa)) are second lumenal domain. A disulfide bridge connects residues cysteine 231 and cysteine 269. Residues asparagine 241, asparagine 249, asparagine 261, asparagine 293, and asparagine 322 are each glycosylated (N-linked (GlcNAc...) asparagine). A disulfide bond links cysteine 338 and cysteine 375. Residues 383 to 410 (LIPIAVGGALAGLVLIVLIAYLVGRKRS) form a helical membrane-spanning segment. At 411-417 (HAGYQTI) the chain is on the cytoplasmic side.

It belongs to the LAMP family. As to quaternary structure, interacts with ABCB9; this interaction strongly stabilizes ABCB9 and protects ABCB9 against lysosomal degradation. Interacts with FURIN. Interacts with TMEM175; inhibiting the proton channel activity of TMEM175. In terms of assembly, (Microbial infection) Interacts with Lassa virus protein glycoprotein. (Microbial infection) Interacts with mumps virus protein F; this interaction promotes protein F cleavage by FURIN. O- and N-glycosylated; some of the 18 N-linked glycans are polylactosaminoglycans. Post-translationally, (Microbial infection) The glycosylation of Asn-76 is essential for Lassa virus entry into cells.

It is found in the lysosome membrane. It localises to the endosome membrane. The protein resides in the late endosome membrane. The protein localises to the cell membrane. Its subcellular location is the cytolytic granule membrane. In terms of biological role, lysosomal membrane glycoprotein which plays an important role in lysosome biogenesis, lysosomal pH regulation, autophagy and cholesterol homeostasis. Acts as an important regulator of lysosomal lumen pH regulation by acting as a direct inhibitor of the proton channel TMEM175, facilitating lysosomal acidification for optimal hydrolase activity. Also plays an important role in NK-cells cytotoxicity. Mechanistically, participates in cytotoxic granule movement to the cell surface and perforin trafficking to the lytic granule. In addition, protects NK-cells from degranulation-associated damage induced by their own cytotoxic granule content. Presents carbohydrate ligands to selectins. Its function is as follows. (Microbial infection) Acts as a receptor for Lassa virus glycoprotein. Also promotes fusion of the virus with host membrane in less acidic endosomes. (Microbial infection) Supports the FURIN-mediated cleavage of mumps virus fusion protein F by interacting with both FURIN and the unprocessed form but not the processed form of the viral protein F. The polypeptide is Lysosome-associated membrane glycoprotein 1 (Homo sapiens (Human)).